A 384-amino-acid chain; its full sequence is MNNLVNLLDLDADALTAYCGELGEKPFRARQLQRWIHQFGASHFDAMTDLAKSLREKLATRAEIRSPAAISDHTSSDGTRKWLLDVGAGNAVETVYIPEDTRGTLCVSSQAGCAVNCRFCSTGKQGFSRNLSTGEIIGQLWMAEFAMRAQLGRGPKDERVISNVVMMGMGEPLLNYDAVVPAMRLMLDDNAYGLSRRRVTLSTSGVVPMMDRLSKDLPVALAVSLHASNDALRDVLVPLNRKYPLAELMAACRRYLEFAPRDFITFEYCMLDGVNDGVEHARELLKLVADVPCKFNLIPFNPFPESGLKRSNNEQIRRFAQVLMDAGIVTTIRKTRGDDIDAACGQLAGEVMDRTRLAERGKFGKITPLVPVADAGAPREARPA.

Glutamate 93 functions as the Proton acceptor in the catalytic mechanism. In terms of domain architecture, Radical SAM core spans 99–339; sequence EDTRGTLCVS…TTIRKTRGDD (241 aa). Cysteine 106 and cysteine 344 form a disulfide bridge. The [4Fe-4S] cluster site is built by cysteine 113, cysteine 117, and cysteine 120. Residues 170–171, serine 202, 224–226, and asparagine 301 contribute to the S-adenosyl-L-methionine site; these read GE and SLH. Catalysis depends on cysteine 344, which acts as the S-methylcysteine intermediate.

The protein belongs to the radical SAM superfamily. RlmN family. [4Fe-4S] cluster is required as a cofactor.

It localises to the cytoplasm. It carries out the reaction adenosine(2503) in 23S rRNA + 2 reduced [2Fe-2S]-[ferredoxin] + 2 S-adenosyl-L-methionine = 2-methyladenosine(2503) in 23S rRNA + 5'-deoxyadenosine + L-methionine + 2 oxidized [2Fe-2S]-[ferredoxin] + S-adenosyl-L-homocysteine. The enzyme catalyses adenosine(37) in tRNA + 2 reduced [2Fe-2S]-[ferredoxin] + 2 S-adenosyl-L-methionine = 2-methyladenosine(37) in tRNA + 5'-deoxyadenosine + L-methionine + 2 oxidized [2Fe-2S]-[ferredoxin] + S-adenosyl-L-homocysteine. Its function is as follows. Specifically methylates position 2 of adenine 2503 in 23S rRNA and position 2 of adenine 37 in tRNAs. m2A2503 modification seems to play a crucial role in the proofreading step occurring at the peptidyl transferase center and thus would serve to optimize ribosomal fidelity. This Cupriavidus metallidurans (strain ATCC 43123 / DSM 2839 / NBRC 102507 / CH34) (Ralstonia metallidurans) protein is Dual-specificity RNA methyltransferase RlmN.